The sequence spans 125 residues: Interleukin-6 (125 aa).

Cys16 and Cys26 form a disulfide bridge.

The protein belongs to the IL-6 superfamily. Component of a hexamer of two molecules each of IL6, IL6R and IL6ST; first binds to IL6R to associate with the signaling subunit IL6ST. Interacts with IL6R (via the N-terminal ectodomain); this interaction may be affected by IL6R-binding with SORL1, hence decreasing IL6 cis signaling. Interacts with SORL1 (via the N-terminal ectodomain); this interaction leads to IL6 internalization and lysosomal degradation. May form a trimeric complex with the soluble SORL1 ectodomain and soluble IL6R receptor; this interaction might stabilize circulating IL6, hence promoting IL6 trans signaling.

Its subcellular location is the secreted. Functionally, cytokine with a wide variety of biological functions in immunity, tissue regeneration, and metabolism. Binds to IL6R, then the complex associates to the signaling subunit IL6ST/gp130 to trigger the intracellular IL6-signaling pathway. The interaction with the membrane-bound IL6R and IL6ST stimulates 'classic signaling', whereas the binding of IL6 and soluble IL6R to IL6ST stimulates 'trans-signaling'. Alternatively, 'cluster signaling' occurs when membrane-bound IL6:IL6R complexes on transmitter cells activate IL6ST receptors on neighboring receiver cells. IL6 is a potent inducer of the acute phase response. Rapid production of IL6 contributes to host defense during infection and tissue injury, but excessive IL6 synthesis is involved in disease pathology. In the innate immune response, is synthesized by myeloid cells, such as macrophages and dendritic cells, upon recognition of pathogens through toll-like receptors (TLRs) at the site of infection or tissue injury. In the adaptive immune response, is required for the differentiation of B cells into immunoglobulin-secreting cells. Plays a major role in the differentiation of CD4(+) T cell subsets. Essential factor for the development of T follicular helper (Tfh) cells that are required for the induction of germinal-center formation. Required to drive naive CD4(+) T cells to the Th17 lineage. Also required for proliferation of myeloma cells and the survival of plasmablast cells. Its function is as follows. Acts as an essential factor in bone homeostasis and on vessels directly or indirectly by induction of VEGF, resulting in increased angiogenesis activity and vascular permeability. Induces, through 'trans-signaling' and synergistically with IL1B and TNF, the production of VEGF. Involved in metabolic controls, is discharged into the bloodstream after muscle contraction increasing lipolysis and improving insulin resistance. 'Trans-signaling' in central nervous system also regulates energy and glucose homeostasis. Mediates, through GLP-1, crosstalk between insulin-sensitive tissues, intestinal L cells and pancreatic islets to adapt to changes in insulin demand. Also acts as a myokine. Plays a protective role during liver injury, being required for maintenance of tissue regeneration. Also has a pivotal role in iron metabolism by regulating HAMP/hepcidin expression upon inflammation or bacterial infection. Through activation of IL6ST-YAP-NOTCH pathway, induces inflammation-induced epithelial regeneration. In Neovison vison (American mink), this protein is Interleukin-6 (IL6).